We begin with the raw amino-acid sequence, 181 residues long: Alkyl hydroperoxide reductase AhpD (181 aa).

The Proton donor role is filled by Cys-131. Cys-131 and Cys-134 are disulfide-bonded. Catalysis depends on Cys-134, which acts as the Cysteine sulfenic acid (-SOH) intermediate.

This sequence belongs to the AhpD family.

The enzyme catalyses N(6)-[(R)-dihydrolipoyl]-L-lysyl-[lipoyl-carrier protein] + a hydroperoxide = N(6)-[(R)-lipoyl]-L-lysyl-[lipoyl-carrier protein] + an alcohol + H2O. Antioxidant protein with alkyl hydroperoxidase activity. Required for the reduction of the AhpC active site cysteine residues and for the regeneration of the AhpC enzyme activity. This Bradyrhizobium sp. (strain ORS 278) protein is Alkyl hydroperoxide reductase AhpD.